Reading from the N-terminus, the 119-residue chain is Large ribosomal subunit protein uL18 (119 aa).

This sequence belongs to the universal ribosomal protein uL18 family. Part of the 50S ribosomal subunit; part of the 5S rRNA/L5/L18/L25 subcomplex. Contacts the 5S and 23S rRNAs.

Its function is as follows. This is one of the proteins that bind and probably mediate the attachment of the 5S RNA into the large ribosomal subunit, where it forms part of the central protuberance. In Sorangium cellulosum (strain So ce56) (Polyangium cellulosum (strain So ce56)), this protein is Large ribosomal subunit protein uL18.